The sequence spans 540 residues: Chaperonin GroEL (540 aa).

ATP contacts are provided by residues 29 to 32, 86 to 90, glycine 413, and aspartate 495; these read TLGP and DGTTT.

The protein belongs to the chaperonin (HSP60) family. Forms a cylinder of 14 subunits composed of two heptameric rings stacked back-to-back. Interacts with the co-chaperonin GroES.

It is found in the cytoplasm. It carries out the reaction ATP + H2O + a folded polypeptide = ADP + phosphate + an unfolded polypeptide.. Together with its co-chaperonin GroES, plays an essential role in assisting protein folding. The GroEL-GroES system forms a nano-cage that allows encapsulation of the non-native substrate proteins and provides a physical environment optimized to promote and accelerate protein folding. This is Chaperonin GroEL from Caldanaerobacter subterraneus subsp. tengcongensis (strain DSM 15242 / JCM 11007 / NBRC 100824 / MB4) (Thermoanaerobacter tengcongensis).